The chain runs to 87 residues: Large ribosomal subunit protein bL27 (87 aa).

The protein belongs to the bacterial ribosomal protein bL27 family.

This Wigglesworthia glossinidia brevipalpis protein is Large ribosomal subunit protein bL27.